The sequence spans 182 residues: Adenine phosphoribosyltransferase (182 aa).

It belongs to the purine/pyrimidine phosphoribosyltransferase family. As to quaternary structure, homodimer.

The protein localises to the cytoplasm. The enzyme catalyses AMP + diphosphate = 5-phospho-alpha-D-ribose 1-diphosphate + adenine. It functions in the pathway purine metabolism; AMP biosynthesis via salvage pathway; AMP from adenine: step 1/1. Its function is as follows. Catalyzes a salvage reaction resulting in the formation of AMP, that is energically less costly than de novo synthesis. This Shewanella frigidimarina (strain NCIMB 400) protein is Adenine phosphoribosyltransferase.